Reading from the N-terminus, the 388-residue chain is Dauer abnormal formation protein 25 (388 aa).

3 ANK repeats span residues S40–D69, T74–L103, and I107–E137. Zn(2+) is bound by residues C321, C324, C333, C336, C341, C345, H353, and C357. An MYND-type zinc finger spans residues C321–C357.

Expressed in many ciliated sensory neurons.

The protein localises to the cell projection. The protein resides in the cilium. Its function is as follows. May be involved in the trafficking and dendritic transport of signaling proteins, such as the receptor-type guanylate cyclases gcy-12 and daf-11, to the cilia. In ciliated sensory neurons, required for the calcium flux to the cytoplasm in response to onset and removal of a nitric oxide (NO) stimulus and is thereby required for the behavioral avoidance response to NO-producing organisms like P.aeruginosa. The polypeptide is Dauer abnormal formation protein 25 (daf-25) (Caenorhabditis elegans).